A 341-amino-acid chain; its full sequence is DER1-like family member protein 1 (341 aa).

Over 1–41 the chain is Cytoplasmic; sequence MAGPRNVRTLHGNGGRNNDVMGPKEFWLNIPPITRTLFTLA. The chain crosses the membrane as a helical span at residues 42–62; sequence IVMTIVGRLNLINPWYFIYVW. Residues 63-122 are Lumenal-facing; that stretch reads NLTFKKVQIWRLLTSCVMLSSRAMPALMELYSIYDRSSQLERGHFGPGLSNRRGPMVTVD. The chain crosses the membrane as a helical span at residues 123–143; that stretch reads YAYYLCFCILAITTATTIIYG. The Cytoplasmic segment spans residues 144–170; that stretch reads SYYPVVLTSGFISCITYTWSIDNANVQ. Residues 171–191 form a helical membrane-spanning segment; it reads IMFYGLIPVWGKYFPLIQLFI. Position 192 (Ser-192) is a topological domain, lumenal. A helical membrane pass occupies residues 193–213; that stretch reads FVFNEGDFVISLIGFTTGYLY. Residues 214–341 lie on the Cytoplasmic side of the membrane; it reads TCLDTHTLGP…GQTNSPSDSQ (128 aa). Polar residues-rich tracts occupy residues 276-286 and 296-341; these read SSQRETRTFSG and ATLS…SDSQ. The disordered stretch occupies residues 276-341; the sequence is SSQRETRTFS…GQTNSPSDSQ (66 aa).

The protein belongs to the derlin family.

The protein resides in the endoplasmic reticulum membrane. Functionally, may be involved in the degradation process of some misfolded endoplasmic reticulum (ER) luminal proteins. Its precise role is however unclear and its inability to complement der1 mutations, suggests either that it is not involved in degradation process of misfolded proteins, or that it participates in the destruction of specific misfolded ER luminal proteins. The polypeptide is DER1-like family member protein 1 (DFM1) (Saccharomyces cerevisiae (strain ATCC 204508 / S288c) (Baker's yeast)).